We begin with the raw amino-acid sequence, 373 residues long: AA9 family lytic polysaccharide monooxygenase A (373 aa).

Residues 1–20 (MKSSTFGMLALAAAAKLVSA) form the signal peptide. His21 provides a ligand contact to Cu(2+). Residues 36–55 (EGNSQSGYIRSPPSNSPITD) are disordered. A disulfide bridge links Cys63 with Cys183. His102 contributes to the Cu(2+) binding site. O2 is bound by residues His169 and Gln178. Tyr180 contributes to the Cu(2+) binding site. The interval 234-333 (GASGSSSSSS…NSVPQPSSNA (100 aa)) is disordered. Composition is skewed to low complexity over residues 235–262 (ASGSSSSSSSSASASAPAPTSAAPAPSS) and 270–323 (PATS…AAPT). The span at 324–333 (NSVPQPSSNA) shows a compositional bias: polar residues. Residues 335–371 (GAVKEWYQCGGLNYSGSTQCEEGLTCKKWNPYYHQCV) enclose the CBM1 domain. Residue Asn347 is glycosylated (N-linked (GlcNAc...) asparagine).

This sequence belongs to the polysaccharide monooxygenase AA9 family. Requires Cu(2+) as cofactor.

Its subcellular location is the secreted. It catalyses the reaction [(1-&gt;4)-beta-D-glucosyl]n+m + reduced acceptor + O2 = 4-dehydro-beta-D-glucosyl-[(1-&gt;4)-beta-D-glucosyl]n-1 + [(1-&gt;4)-beta-D-glucosyl]m + acceptor + H2O.. Its function is as follows. Lytic polysaccharide monooxygenase (LPMO) that depolymerizes crystalline and amorphous polysaccharides via the oxidation of scissile alpha- or beta-(1-4)-glycosidic bonds, yielding exclusively C4 oxidation products. Catalysis by LPMOs requires the reduction of the active-site copper from Cu(II) to Cu(I) by a reducing agent and H(2)O(2) or O(2) as a cosubstrate. In addition to cellulose, also cleaves the beta-(1!4)-glucan backbone of tamarind xyloglucan, but only next to unsubstituted glucosyl units. The chain is AA9 family lytic polysaccharide monooxygenase A from Aspergillus tamarii.